Here is a 343-residue protein sequence, read N- to C-terminus: Transmembrane protein 120A (343 aa).

The Cytoplasmic segment spans residues 1 to 135; it reads MQSPPPDPLG…KFAYKDEYEK (135 aa). K130 is a CoA binding site. The helical transmembrane segment at 136-156 threads the bilayer; sequence FKLYLTIILIVISFTCRFLLN. Over 157–162 the chain is Extracellular; it reads SRVTDA. The chain crosses the membrane as a helical span at residues 163 to 183; the sequence is AFNFLLVWYYCTLTIRESILI. The Cytoplasmic portion of the chain corresponds to 184-190; it reads NNGSRIK. Positions 187 and 188 each coordinate CoA. The helical transmembrane segment at 191-211 threads the bilayer; the sequence is GWWVFHHYVSTFLSGVMLTWP. Residues 212-222 lie on the Extracellular side of the membrane; it reads DGLMYQKFRNQ. Residues 223 to 240 traverse the membrane as a helical segment; it reads FLSFSMYQSFVQFLQYYY. 4 residues coordinate CoA: Q237, Y240, Q241, and H283. At 241 to 273 the chain is on the cytoplasmic side; it reads QSGCLYRLRALGERHTMDLTVEGFQSWMWRGLT. Residues 274–294 form a helical membrane-spanning segment; the sequence is FLLPFLFFGHFWQLFNALTLF. The Extracellular segment spans residues 295-305; sequence NLARDPECKEW. A helical membrane pass occupies residues 306-326; that stretch reads QVLMCGFPFLLLFLGNFFTTL. Residues 327-343 lie on the Cytoplasmic side of the membrane; that stretch reads RVVHQKFHSQQHGNKKD. K332 contributes to the CoA binding site.

This sequence belongs to the TMEM120 family. As to quaternary structure, homodimer. Forms heterooligomer with TMEM120B. Interacts with PKD2; TMEM120A inhibits PKD2 channel activity through the physical association of PKD2 with TMEM120A. In terms of tissue distribution, widely expressed, with higher expression in the heart, kidneys, colon and sensory neurons of the dorsal root ganglia. Expressed in nociceptors. Highly expressed in white adipose tissue (at protein level). Highly expressed in brown adipose tissue and expressed at low levels in liver.

Its subcellular location is the cell membrane. It localises to the nucleus envelope. It is found in the nucleus inner membrane. The protein resides in the endoplasmic reticulum. Functionally, multifunctional protein involved in mechanosensation, and plays an essential role in lipid metabolism and adipocyte differentiation. May function as a potential ion channel involved in sensing mechanical stimuli. Mediates the mechanosensitivity of the PKD2-TMEM120A channel complex through direct physical interaction. TMEM120A seems to affect mechanosensation by inhibiting PIEZO2 channels, possibly by altering cellular lipid content. TMEM120A is structurally similar to a lipid-modifying enzyme, ELOVL7, and contains a bound coenzyme A molecule, which suggests it might function as an enzyme in lipid metabolism. The protein is Transmembrane protein 120A of Mus musculus (Mouse).